The following is a 131-amino-acid chain: MKEDGMAKITTDELIESFKEMTLIELSEFVSKFEEVFKVTAAAPVAAAAAPVEPAAEAAPEKTTFDVILEAAGDKKIQVIKEVRTITGLGLGEAKALVDGVPSKVLEGANKDAADAAKAQLEAAGAQVSVK.

The protein belongs to the bacterial ribosomal protein bL12 family. In terms of assembly, homodimer. Part of the ribosomal stalk of the 50S ribosomal subunit. Forms a multimeric L10(L12)X complex, where L10 forms an elongated spine to which 2 to 4 L12 dimers bind in a sequential fashion. Binds GTP-bound translation factors.

Forms part of the ribosomal stalk which helps the ribosome interact with GTP-bound translation factors. Is thus essential for accurate translation. This chain is Large ribosomal subunit protein bL12, found in Tropheryma whipplei (strain Twist) (Whipple's bacillus).